A 268-amino-acid polypeptide reads, in one-letter code: MRRIAVMGAAGRMGKTLVEAVQLRSPLSGLTAAIVRPGSSLVGADAGELASLGRLGVPMSDSLEKVVDEFDVLIDFTLPEVMLKNLAFCRKAGKAMVIGTTGLGAREKQLLAEAGKEIPIVFAANFSVGVNLSLKLLDMAARVLGDDADIEIIEAHHRHKIDAPSGTALRMGEVIASALGRDLQQVAVYGREGHTGARERETIGFATVRGGDVVGDHTVLFATEGERLEITHKASSRMTFAKGAVRAALWLDGREAGLYDMQDVLDLR.

Residue 8–13 (GAAGRM) participates in NAD(+) binding. Position 36 (Arg36) interacts with NADP(+). NAD(+) is bound by residues 99 to 101 (GTT) and 123 to 126 (AANF). The Proton donor/acceptor role is filled by His156. His157 is a binding site for (S)-2,3,4,5-tetrahydrodipicolinate. Residue Lys160 is the Proton donor of the active site. 166-167 (GT) contacts (S)-2,3,4,5-tetrahydrodipicolinate.

It belongs to the DapB family.

The protein resides in the cytoplasm. The catalysed reaction is (S)-2,3,4,5-tetrahydrodipicolinate + NAD(+) + H2O = (2S,4S)-4-hydroxy-2,3,4,5-tetrahydrodipicolinate + NADH + H(+). It carries out the reaction (S)-2,3,4,5-tetrahydrodipicolinate + NADP(+) + H2O = (2S,4S)-4-hydroxy-2,3,4,5-tetrahydrodipicolinate + NADPH + H(+). Its pathway is amino-acid biosynthesis; L-lysine biosynthesis via DAP pathway; (S)-tetrahydrodipicolinate from L-aspartate: step 4/4. In terms of biological role, catalyzes the conversion of 4-hydroxy-tetrahydrodipicolinate (HTPA) to tetrahydrodipicolinate. The protein is 4-hydroxy-tetrahydrodipicolinate reductase of Pseudomonas fluorescens (strain ATCC BAA-477 / NRRL B-23932 / Pf-5).